We begin with the raw amino-acid sequence, 136 residues long: Small ribosomal subunit protein bS16 (136 aa).

Basic residues predominate over residues 113–122 (LALKSHRRSA). Residues 113–136 (LALKSHRRSAKKEAEAKAATGGEA) are disordered.

Belongs to the bacterial ribosomal protein bS16 family.

The protein is Small ribosomal subunit protein bS16 of Pelodictyon phaeoclathratiforme (strain DSM 5477 / BU-1).